A 91-amino-acid polypeptide reads, in one-letter code: Ice-structuring protein (91 aa).

Positions 1-21 (MALSLFTVGQLIFLFWTMRIT) are cleaved as a signal peptide. Residues 22–39 (EANPDPAAKAVPAAAAPD) constitute a propeptide, removed by a dipeptidylpeptidase.

Belongs to the type-I AFP family.

It is found in the secreted. Functionally, contributes to protect fish blood from freezing at subzero sea water temperatures. Lowers the blood freezing point. Binds to nascent ice crystals and prevents further growth. The chain is Ice-structuring protein from Pseudopleuronectes americanus (Winter flounder).